Reading from the N-terminus, the 251-residue chain is MPKRDAPWRHMAGTSKVSRSGNYSPSGGMGSKSNKANAWVNRPMYRKPRIYRMYKSPDVPKGCEGPCKVQSYEQRHDISHVGKVMCISDITRGNGITHRVGKRFCVKSVYILGKIWMDENIMLKNHTNSVIFWLVRDRRPYGTPMDFGQVFNMFDNEPSTATVKNDLRDRYQVMHRFNAKVSGGQYASNEQALVRRFWKVNNHVVYNHQEAGKYENHTENALLLYMACTHASNPVYATLKIRIYFYDSITN.

The interval 1-35 (MPKRDAPWRHMAGTSKVSRSGNYSPSGGMGSKSNK) is disordered. Residues 3–20 (KRDAPWRHMAGTSKVSRS) carry the Bipartite nuclear localization signal motif. Over residues 15 to 35 (SKVSRSGNYSPSGGMGSKSNK) the composition is skewed to polar residues. A Nuclear localization signal motif is present at residues 35 to 49 (KANAWVNRPMYRKPR). The segment at 54–71 (YKSPDVPKGCEGPCKVQS) is a zinc-finger region. The Nuclear export signal signature appears at 96-117 (ITHRVGKRFCVKSVYILGKIWM). Residues 195–242 (RRFWKVNNHVVYNHQEAGKYENHTENALLLYMACTHASNPVYATLKIR) carry the Bipartite nuclear localization signal motif.

Belongs to the geminiviridae capsid protein family. Homomultimer. Binds to single-stranded and double-stranded viral DNA. Interacts (via nuclear localization signals) with host importin alpha-1a.

The protein localises to the virion. It is found in the host nucleus. In terms of biological role, encapsidates the viral DNA into characteristic twinned ('geminate') particles. Binds the genomic viral ssDNA and shuttles it into and out of the cell nucleus. The CP of bipartite geminiviruses is not required for cell-to-cell or systemic movement. The chain is Capsid protein from Macroptilium lathyroides (Lima bean).